Reading from the N-terminus, the 358-residue chain is 3-dehydroquinate synthase (358 aa).

Residues 69 to 74, 103 to 107, 127 to 128, K140, K149, and 167 to 170 each bind NAD(+); these read DGEQYK, GVIGD, TT, and TLNT. The Zn(2+) site is built by E182, H245, and H262.

Belongs to the sugar phosphate cyclases superfamily. Dehydroquinate synthase family. The cofactor is Co(2+). It depends on Zn(2+) as a cofactor. NAD(+) serves as cofactor.

The protein localises to the cytoplasm. The catalysed reaction is 7-phospho-2-dehydro-3-deoxy-D-arabino-heptonate = 3-dehydroquinate + phosphate. It functions in the pathway metabolic intermediate biosynthesis; chorismate biosynthesis; chorismate from D-erythrose 4-phosphate and phosphoenolpyruvate: step 2/7. In terms of biological role, catalyzes the conversion of 3-deoxy-D-arabino-heptulosonate 7-phosphate (DAHP) to dehydroquinate (DHQ). This chain is 3-dehydroquinate synthase, found in Hydrogenovibrio crunogenus (strain DSM 25203 / XCL-2) (Thiomicrospira crunogena).